The following is a 134-amino-acid chain: Aspartate 1-decarboxylase (134 aa).

Residue serine 25 is the Schiff-base intermediate with substrate; via pyruvic acid of the active site. The residue at position 25 (serine 25) is a Pyruvic acid (Ser). Residue threonine 57 participates in substrate binding. The active-site Proton donor is the tyrosine 58. Substrate is bound at residue glycine 73 to alanine 75.

The protein belongs to the PanD family. Heterooctamer of four alpha and four beta subunits. Requires pyruvate as cofactor. In terms of processing, is synthesized initially as an inactive proenzyme, which is activated by self-cleavage at a specific serine bond to produce a beta-subunit with a hydroxyl group at its C-terminus and an alpha-subunit with a pyruvoyl group at its N-terminus.

Its subcellular location is the cytoplasm. The catalysed reaction is L-aspartate + H(+) = beta-alanine + CO2. Its pathway is cofactor biosynthesis; (R)-pantothenate biosynthesis; beta-alanine from L-aspartate: step 1/1. Catalyzes the pyruvoyl-dependent decarboxylation of aspartate to produce beta-alanine. This Mycolicibacterium gilvum (strain PYR-GCK) (Mycobacterium gilvum (strain PYR-GCK)) protein is Aspartate 1-decarboxylase.